Consider the following 472-residue polypeptide: Platelet glycoprotein 4 (472 aa).

At Met-1–Cys-7 the chain is on the cytoplasmic side. 2 S-palmitoyl cysteine lipidation sites follow: Cys-3 and Cys-7. The helical transmembrane segment at Gly-8–Val-29 threads the bilayer. Over Gly-30–Lys-439 the chain is Extracellular. 8 N-linked (GlcNAc...) asparagine glycosylation sites follow: Asn-79, Asn-102, Asn-132, Asn-205, Asn-235, Asn-247, Asn-321, and Asn-417. The tract at residues Tyr-93–Ala-120 is required for interaction with thrombospondins, THBS1 and THBS2. 3 disulfide bridges follow: Cys-243-Cys-311, Cys-272-Cys-333, and Cys-313-Cys-322. The helical transmembrane segment at Leu-440–Ile-461 threads the bilayer. An interaction with PTK2, PXN and LYN region spans residues Met-460–Lys-472. Residues Ser-462–Lys-472 are Cytoplasmic-facing. S-palmitoyl cysteine attachment occurs at residues Cys-464 and Cys-466. Residues Lys-469 and Lys-472 each participate in a glycyl lysine isopeptide (Lys-Gly) (interchain with G-Cter in ubiquitin) cross-link.

Belongs to the CD36 family. In terms of assembly, interacts with THBS1 and THBS2; the interactions mediate the THBS antiangiogenic activity. Upon interaction with a ligand, such as oxidized low-density lipoprotein (oxLDL) or amyloid-beta 42, rapidly forms a complex with TLR4 and TLR6; the complex is internalized and triggers an inflammatory signal. Through its C-terminus, interacts with PTK2, PXN and LYN, but not with SRC. LYN kinase activity is required for facilitating TLR4:TLR6 heterodimerization and signal initiation. Upon interaction with ligands such as diacylated lipopeptides, interacts with the TLR2:TLR6 heterodimer. Interacts with CD9, CD81, FCER1G, ITGB2 and/or ITGB2; forming a membrane heteromeric complex required for the internalization of CD36 and its ligands. Interacts (when palmitoylated) with ARF6; this interaction mediates CD36 transport to the plasma membrane. In terms of processing, palmitoylated by ZDHHC5. Palmitoylation is required for proper localization at the plasma membrane. Ubiquitinated at Lys-469 and Lys-472. Ubiquitination is induced by fatty acids such as oleic acid and leads to degradation by the proteasome. Ubiquitination and degradation are inhibited by insulin which blocks the effect of fatty acids.

The protein localises to the cell membrane. It is found in the membrane raft. Its subcellular location is the golgi apparatus. The protein resides in the apical cell membrane. It catalyses the reaction butanoate(out) = butanoate(in). It carries out the reaction (9Z)-octadecenoate(out) = (9Z)-octadecenoate(in). The enzyme catalyses (9Z,12Z)-octadecadienoate(out) = (9Z,12Z)-octadecadienoate(in). The catalysed reaction is tetradecanoate(out) = tetradecanoate(in). It catalyses the reaction hexadecanoate(out) = hexadecanoate(in). It carries out the reaction tetracosanoate(out) = tetracosanoate(in). Its function is as follows. Multifunctional glycoprotein that acts as a receptor for a broad range of ligands. Ligands can be of proteinaceous nature like thrombospondin, fibronectin, collagen or amyloid-beta as well as of lipidic nature such as oxidized low-density lipoprotein (oxLDL), anionic phospholipids, long-chain fatty acids and bacterial diacylated lipopeptides. They are generally multivalent and can therefore engage multiple receptors simultaneously, the resulting formation of CD36 clusters initiates signal transduction and internalization of receptor-ligand complexes. The dependency on coreceptor signaling is strongly ligand specific. Cellular responses to these ligands are involved in angiogenesis, inflammatory response, fatty acid metabolism, taste and dietary fat processing in the intestine. Binds long-chain fatty acids and facilitates their transport into cells, thus participating in muscle lipid utilization, adipose energy storage, and gut fat absorption. Mechanistically, binding of fatty acids activates downstream kinase LYN, which phosphorylates the palmitoyltransferase ZDHHC5 and inactivates it, resulting in the subsequent depalmitoylation of CD36 and caveolar endocytosis. In the small intestine, plays a role in proximal absorption of dietary fatty acid and cholesterol for optimal chylomicron formation, possibly through the activation of MAPK1/3 (ERK1/2) signaling pathway. Involved in oral fat perception and preferences. Detection into the tongue of long-chain fatty acids leads to a rapid and sustained rise in flux and protein content of pancreatobiliary secretions. In taste receptor cells, mediates the induction of an increase in intracellular calcium levels by long-chain fatty acids, leading to the activation of the gustatory neurons in the nucleus of the solitary tract. Important factor in both ventromedial hypothalamus neuronal sensing of long-chain fatty acid and the regulation of energy and glucose homeostasis. Receptor for thrombospondins, THBS1 and THBS2, mediating their antiangiogenic effects. As a coreceptor for TLR4:TLR6 heterodimer, promotes inflammation in monocytes/macrophages. Upon ligand binding, such as oxLDL or amyloid-beta 42, interacts with the heterodimer TLR4:TLR6, the complex is internalized and triggers inflammatory response, leading to NF-kappa-B-dependent production of CXCL1, CXCL2 and CCL9 cytokines, via MYD88 signaling pathway, and CCL5 cytokine, via TICAM1 signaling pathway, as well as IL1B secretion, through the priming and activation of the NLRP3 inflammasome. Selective and nonredundant sensor of microbial diacylated lipopeptide that signal via TLR2:TLR6 heterodimer, this cluster triggers signaling from the cell surface, leading to the NF-kappa-B-dependent production of TNF, via MYD88 signaling pathway and subsequently is targeted to the Golgi in a lipid-raft dependent pathway. In Mesocricetus auratus (Golden hamster), this protein is Platelet glycoprotein 4 (CD36).